Reading from the N-terminus, the 514-residue chain is ATP synthase subunit alpha (514 aa).

170-177 (GDRQIGKT) is a binding site for ATP.

The protein belongs to the ATPase alpha/beta chains family. F-type ATPases have 2 components, CF(1) - the catalytic core - and CF(0) - the membrane proton channel. CF(1) has five subunits: alpha(3), beta(3), gamma(1), delta(1), epsilon(1). CF(0) has three main subunits: a(1), b(2) and c(9-12). The alpha and beta chains form an alternating ring which encloses part of the gamma chain. CF(1) is attached to CF(0) by a central stalk formed by the gamma and epsilon chains, while a peripheral stalk is formed by the delta and b chains.

It is found in the cell inner membrane. It carries out the reaction ATP + H2O + 4 H(+)(in) = ADP + phosphate + 5 H(+)(out). Its function is as follows. Produces ATP from ADP in the presence of a proton gradient across the membrane. The alpha chain is a regulatory subunit. The polypeptide is ATP synthase subunit alpha (Pseudomonas entomophila (strain L48)).